The primary structure comprises 78 residues: Large ribosomal subunit protein bL28 (78 aa).

Belongs to the bacterial ribosomal protein bL28 family.

In Francisella tularensis subsp. holarctica (strain FTNF002-00 / FTA), this protein is Large ribosomal subunit protein bL28.